A 292-amino-acid chain; its full sequence is Protease HtpX (292 aa).

2 helical membrane passes run 5-25 (IFLFLLTNLAVLMLAGIVMSL) and 34-54 (SGLLVMAAIFGFGGSFISLLL). H140 is a binding site for Zn(2+). The active site involves E141. A Zn(2+)-binding site is contributed by H144. Transmembrane regions (helical) follow at residues 155 to 175 (LLQGVLNTFVIVLARVVGGII) and 193 to 213 (IIVFALEMVFGLFATMIAMWF). E218 contacts Zn(2+).

Belongs to the peptidase M48B family. It depends on Zn(2+) as a cofactor.

The protein resides in the cell inner membrane. The chain is Protease HtpX from Xanthomonas axonopodis pv. citri (strain 306).